Here is a 211-residue protein sequence, read N- to C-terminus: Small ribosomal subunit protein eS1 (211 aa).

This sequence belongs to the eukaryotic ribosomal protein eS1 family.

This is Small ribosomal subunit protein eS1 from Archaeoglobus fulgidus (strain ATCC 49558 / DSM 4304 / JCM 9628 / NBRC 100126 / VC-16).